The sequence spans 560 residues: Membrane protein insertase YidC (560 aa).

The next 6 membrane-spanning stretches (helical) occupy residues 5 to 25, 334 to 354, 357 to 377, 431 to 451, 476 to 496, and 522 to 542; these read IINLIAAIILSLSIIFGWQYF, AIDFGWFYIITKPVFYAMNFF, YVGNFGVSILIVTVIIKLLMF, LPILVQIPLFFSIYKVLYVTI, LFGLLPFSPPSFLMIGAWPIL, and FMPLIFLFMFSSFPVGLLIYW.

It belongs to the OXA1/ALB3/YidC family. Type 1 subfamily. As to quaternary structure, interacts with the Sec translocase complex via SecD. Specifically interacts with transmembrane segments of nascent integral membrane proteins during membrane integration.

The protein localises to the cell inner membrane. Its function is as follows. Required for the insertion and/or proper folding and/or complex formation of integral membrane proteins into the membrane. Involved in integration of membrane proteins that insert both dependently and independently of the Sec translocase complex, as well as at least some lipoproteins. Aids folding of multispanning membrane proteins. This is Membrane protein insertase YidC from Rickettsia felis (strain ATCC VR-1525 / URRWXCal2) (Rickettsia azadi).